Reading from the N-terminus, the 930-residue chain is Polypeptide N-acetylgalactosaminyltransferase 5 (930 aa).

Topologically, residues methionine 1–glycine 12 are cytoplasmic. The helical; Signal-anchor for type II membrane protein transmembrane segment at arginine 13–leucine 35 threads the bilayer. Residues serine 36 to valine 930 are Lumenal-facing. Positions glycine 163 to arginine 210 are disordered. N-linked (GlcNAc...) asparagine glycosylation occurs at asparagine 178. Residues threonine 180–alanine 193 show a composition bias toward basic and acidic residues. Positions tyrosine 197–arginine 210 are enriched in polar residues. 2 N-linked (GlcNAc...) asparagine glycosylation sites follow: asparagine 198 and asparagine 213. Serine 285 is subject to Phosphoserine. N-linked (GlcNAc...) asparagine glycans are attached at residues asparagine 287 and asparagine 309. Residues leucine 344–leucine 377 form a disordered region. 2 N-linked (GlcNAc...) asparagine glycosylation sites follow: asparagine 387 and asparagine 403. 3 cysteine pairs are disulfide-bonded: cysteine 476/cysteine 708, cysteine 699/cysteine 779, and cysteine 812/cysteine 825. The tract at residues leucine 485–arginine 594 is catalytic subdomain A. Positions 526 and 555 each coordinate substrate. Asparagine 568 is a glycosylation site (N-linked (GlcNAc...) asparagine). Aspartate 578 lines the Mn(2+) pocket. Serine 579 contacts substrate. Histidine 580 contacts Mn(2+). The tract at residues isoleucine 654–arginine 716 is catalytic subdomain B. Tryptophan 685 contacts substrate. Position 713 (histidine 713) interacts with Mn(2+). Substrate-binding residues include arginine 716 and tyrosine 721. Residues asparagine 766, asparagine 817, and asparagine 835 are each glycosylated (N-linked (GlcNAc...) asparagine). The region spanning lysine 794 to glutamate 925 is the Ricin B-type lectin domain. 2 disulfides stabilise this stretch: cysteine 848–cysteine 863 and cysteine 898–cysteine 913. Asparagine 902 carries N-linked (GlcNAc...) asparagine glycosylation.

It belongs to the glycosyltransferase 2 family. GalNAc-T subfamily. As to quaternary structure, interacts with EXT2. Does not interact with EXT1, EXTL1 or EXTL3. The cofactor is Mn(2+). In terms of tissue distribution, predominantly expressed in sublingual gland. Expressed at lower level in stomach and small intestine. Weakly or not expressed in submandibular gland, parotid gland, kidney, liver, heart, brain, spleen, lung, skeletal muscle, testis, ovary, cervix and uterus.

Its subcellular location is the golgi apparatus membrane. It catalyses the reaction L-seryl-[protein] + UDP-N-acetyl-alpha-D-galactosamine = a 3-O-[N-acetyl-alpha-D-galactosaminyl]-L-seryl-[protein] + UDP + H(+). It carries out the reaction L-threonyl-[protein] + UDP-N-acetyl-alpha-D-galactosamine = a 3-O-[N-acetyl-alpha-D-galactosaminyl]-L-threonyl-[protein] + UDP + H(+). It functions in the pathway protein modification; protein glycosylation. In terms of biological role, catalyzes the initial reaction in O-linked oligosaccharide biosynthesis, the transfer of an N-acetyl-D-galactosamine residue to a serine or threonine residue on the protein receptor. Has activity toward EA2 peptide substrate, but has a weak activity toward Muc2, Muc1b, rMuc-2 or mG-Muc substrates. The polypeptide is Polypeptide N-acetylgalactosaminyltransferase 5 (Galnt5) (Rattus norvegicus (Rat)).